Here is a 459-residue protein sequence, read N- to C-terminus: Argininosuccinate lyase (459 aa).

It belongs to the lyase 1 family. Argininosuccinate lyase subfamily.

The protein localises to the cytoplasm. The catalysed reaction is 2-(N(omega)-L-arginino)succinate = fumarate + L-arginine. The protein operates within amino-acid biosynthesis; L-arginine biosynthesis; L-arginine from L-ornithine and carbamoyl phosphate: step 3/3. The chain is Argininosuccinate lyase from Lactococcus lactis subsp. lactis (strain IL1403) (Streptococcus lactis).